Consider the following 452-residue polypeptide: tRNA modification GTPase MnmE (452 aa).

(6S)-5-formyl-5,6,7,8-tetrahydrofolate-binding residues include R21, E78, and K118. A TrmE-type G domain is found at 214–375 (GMKAVIAGRP…LREHLKTSMG (162 aa)). N224 lines the K(+) pocket. GTP is bound by residues 224 to 229 (NAGKSS), 243 to 249 (TNIAGTT), and 268 to 271 (DTAG). S228 contacts Mg(2+). Residues T243, I245, and T248 each contribute to the K(+) site. T249 contacts Mg(2+). K452 is a binding site for (6S)-5-formyl-5,6,7,8-tetrahydrofolate.

It belongs to the TRAFAC class TrmE-Era-EngA-EngB-Septin-like GTPase superfamily. TrmE GTPase family. As to quaternary structure, homodimer. Heterotetramer of two MnmE and two MnmG subunits. K(+) is required as a cofactor.

The protein localises to the cytoplasm. Its function is as follows. Exhibits a very high intrinsic GTPase hydrolysis rate. Involved in the addition of a carboxymethylaminomethyl (cmnm) group at the wobble position (U34) of certain tRNAs, forming tRNA-cmnm(5)s(2)U34. This chain is tRNA modification GTPase MnmE, found in Haemophilus ducreyi (strain 35000HP / ATCC 700724).